Reading from the N-terminus, the 214-residue chain is tRNA (guanine-N(7)-)-methyltransferase (214 aa).

Residues Glu43, Glu68, Asp95, and Asp117 each coordinate S-adenosyl-L-methionine. Asp117 is an active-site residue. Residues Lys121, Asp153, and Thr190–Glu193 contribute to the substrate site.

The protein belongs to the class I-like SAM-binding methyltransferase superfamily. TrmB family.

It carries out the reaction guanosine(46) in tRNA + S-adenosyl-L-methionine = N(7)-methylguanosine(46) in tRNA + S-adenosyl-L-homocysteine. It functions in the pathway tRNA modification; N(7)-methylguanine-tRNA biosynthesis. Catalyzes the formation of N(7)-methylguanine at position 46 (m7G46) in tRNA. This Staphylococcus aureus (strain Mu3 / ATCC 700698) protein is tRNA (guanine-N(7)-)-methyltransferase.